A 91-amino-acid polypeptide reads, in one-letter code: Small ribosomal subunit protein uS19 (91 aa).

The protein belongs to the universal ribosomal protein uS19 family.

Its function is as follows. Protein S19 forms a complex with S13 that binds strongly to the 16S ribosomal RNA. This Ralstonia nicotianae (strain ATCC BAA-1114 / GMI1000) (Ralstonia solanacearum) protein is Small ribosomal subunit protein uS19.